Reading from the N-terminus, the 122-residue chain is Small ribosomal subunit protein uS13 (122 aa).

The disordered stretch occupies residues 93–122 (RRGLPVRGQRTKTNARTRKGPKKTIAGKKK).

This sequence belongs to the universal ribosomal protein uS13 family. Part of the 30S ribosomal subunit. Forms a loose heterodimer with protein S19. Forms two bridges to the 50S subunit in the 70S ribosome.

Functionally, located at the top of the head of the 30S subunit, it contacts several helices of the 16S rRNA. In the 70S ribosome it contacts the 23S rRNA (bridge B1a) and protein L5 of the 50S subunit (bridge B1b), connecting the 2 subunits; these bridges are implicated in subunit movement. Contacts the tRNAs in the A and P-sites. In Corynebacterium efficiens (strain DSM 44549 / YS-314 / AJ 12310 / JCM 11189 / NBRC 100395), this protein is Small ribosomal subunit protein uS13.